The chain runs to 354 residues: Ornithine transcarbamylase, mitochondrial (354 aa).

The transit peptide at 1 to 32 (MLFNLRILLNNAAFRNGHNFMVRNFRCGQPLQ) directs the protein to the mitochondrion. Position 70 is an N6-acetyllysine; alternate (Lys70). Lys70 is modified (N6-succinyllysine; alternate). Lys80 is subject to N6-succinyllysine. Lys88 bears the N6-acetyllysine; alternate mark. An N6-succinyllysine; alternate modification is found at Lys88. 90–93 (STRT) provides a ligand contact to carbamoyl phosphate. Position 133 is a phosphoserine (Ser133). A carbamoyl phosphate-binding site is contributed by Arg141. Lys144 bears the N6-acetyllysine; alternate mark. Position 144 is an N6-succinyllysine; alternate (Lys144). Positions 168 and 171 each coordinate carbamoyl phosphate. An L-ornithine-binding site is contributed by Asn199. 3 positions are modified to N6-acetyllysine; alternate: Lys221, Lys231, and Lys238. An N6-succinyllysine; alternate mark is found at Lys221, Lys231, and Lys238. The residue at position 243 (Lys243) is an N6-acetyllysine. Positions 263, 267, and 268 each coordinate L-ornithine. An N6-succinyllysine mark is found at Lys274 and Lys289. Lys292 carries the post-translational modification N6-acetyllysine; alternate. Position 292 is an N6-succinyllysine; alternate (Lys292). Catalysis depends on Cys303, which acts as the Proton acceptor. 303–304 (CL) is a carbamoyl phosphate binding site. At Lys307 the chain carries N6-acetyllysine; alternate. At Lys307 the chain carries N6-succinyllysine; alternate. A carbamoyl phosphate-binding site is contributed by Arg330.

Belongs to the aspartate/ornithine carbamoyltransferase superfamily. OTCase family. Homotrimer. Acetylation at Lys-88 negatively regulates ornithine carbamoyltransferase activity in response to nutrient signals. As to expression, mainly expressed in liver and intestinal mucosa.

The protein localises to the mitochondrion matrix. It carries out the reaction carbamoyl phosphate + L-ornithine = L-citrulline + phosphate + H(+). The protein operates within nitrogen metabolism; urea cycle; L-citrulline from L-ornithine and carbamoyl phosphate: step 1/1. Negatively regulated by lysine acetylation. Its function is as follows. Catalyzes the second step of the urea cycle, the condensation of carbamoyl phosphate with L-ornithine to form L-citrulline. The urea cycle ensures the detoxification of ammonia by converting it to urea for excretion. This is Ornithine transcarbamylase, mitochondrial from Homo sapiens (Human).